A 253-amino-acid polypeptide reads, in one-letter code: Chloride intracellular channel protein 4 (253 aa).

Ala2 carries the N-acetylalanine modification. Residues Ala2 to Pro101 form a required for insertion into the membrane region. Ser4 is modified (phosphoserine). N6-acetyllysine is present on Lys24. Residues Cys35–Ser38 carry the G-site motif. The chain crosses the membrane as a helical span at residues Phe37 to Val57. The 164-residue stretch at Asn81–Tyr244 folds into the GST C-terminal domain. Lys130 is modified (N6-acetyllysine). Residues Ser132, Ser167, and Ser236 each carry the phosphoserine modification. Tyr244 is subject to Phosphotyrosine.

The protein belongs to the chloride channel CLIC family. Monomer. Interacts with HRH30. Interacts with AKAP9. Detected in blood vessels in the retina (at protein level). Expressed to the greatest extent in vivo in heart, lung, liver, kidney, and skin.

It localises to the cytoplasm. Its subcellular location is the cytoskeleton. It is found in the microtubule organizing center. The protein localises to the centrosome. The protein resides in the cytoplasmic vesicle membrane. It localises to the nucleus. Its subcellular location is the cell membrane. It is found in the mitochondrion. The protein localises to the cell junction. It carries out the reaction chloride(in) = chloride(out). The enzyme catalyses thiocyanate(in) = thiocyanate(out). The catalysed reaction is nitrate(in) = nitrate(out). It catalyses the reaction iodide(out) = iodide(in). It carries out the reaction bromide(in) = bromide(out). The enzyme catalyses fluoride(in) = fluoride(out). The catalysed reaction is choline(out) = choline(in). Functionally, in the soluble state, catalyzes glutaredoxin-like thiol disulfide exchange reactions with reduced glutathione as electron donor. Can insert into membranes and form voltage-dependent multi-ion conductive channels. Membrane insertion seems to be redox-regulated and may occur only under oxidizing conditions. Has alternate cellular functions like a potential role in angiogenesis or in maintaining apical-basolateral membrane polarity during mitosis and cytokinesis. Could also promote endothelial cell proliferation and regulate endothelial morphogenesis (tubulogenesis). Promotes cell-surface expression of HRH3. This chain is Chloride intracellular channel protein 4 (Clic4), found in Mus musculus (Mouse).